The sequence spans 253 residues: MRILLTNDDGVHAPGLAALRQQLRHLGEVITVAPATEQSGVGHSITYLTPLVPKSIHRDGVHWAWAVEGSPADCVKLSLAELFVDEPIDLVVSGINNGLNAGINVLYSGTVAAAIEGAFFGVTSVAVSLENSDDNDFDAAAVIARNVIGEIVRHEESRGGLFNLNVPTAATESASEVKVVPMGLAQYGRRYEKRQDPGGRDYYWALWTQPDKPPAEMTDVTQLREGCVTLTPLHFNLTRDDLLSEMKDWNLRP.

Residues Asp8, Asp9, Ser39, and Asn96 each contribute to the a divalent metal cation site.

Belongs to the SurE nucleotidase family. It depends on a divalent metal cation as a cofactor.

Its subcellular location is the cytoplasm. It carries out the reaction a ribonucleoside 5'-phosphate + H2O = a ribonucleoside + phosphate. Its function is as follows. Nucleotidase that shows phosphatase activity on nucleoside 5'-monophosphates. This chain is 5'-nucleotidase SurE, found in Rhodopirellula baltica (strain DSM 10527 / NCIMB 13988 / SH1).